The sequence spans 251 residues: Small ribosomal subunit protein uS2 (251 aa).

The interval 232–251 (EAIAEMDEQVEEDAEEASND) is disordered.

Belongs to the universal ribosomal protein uS2 family.

The polypeptide is Small ribosomal subunit protein uS2 (Chlorobaculum parvum (strain DSM 263 / NCIMB 8327) (Chlorobium vibrioforme subsp. thiosulfatophilum)).